A 642-amino-acid chain; its full sequence is Threonine--tRNA ligase (642 aa).

Residues methionine 1 to threonine 61 enclose the TGS domain. A catalytic region spans residues aspartate 243–proline 534. Residues cysteine 334, histidine 385, and histidine 511 each coordinate Zn(2+).

Belongs to the class-II aminoacyl-tRNA synthetase family. In terms of assembly, homodimer. Zn(2+) is required as a cofactor.

It localises to the cytoplasm. The catalysed reaction is tRNA(Thr) + L-threonine + ATP = L-threonyl-tRNA(Thr) + AMP + diphosphate + H(+). Catalyzes the attachment of threonine to tRNA(Thr) in a two-step reaction: L-threonine is first activated by ATP to form Thr-AMP and then transferred to the acceptor end of tRNA(Thr). Also edits incorrectly charged L-seryl-tRNA(Thr). The polypeptide is Threonine--tRNA ligase (Salmonella agona (strain SL483)).